The sequence spans 185 residues: Large ribosomal subunit protein uL5 (185 aa).

This sequence belongs to the universal ribosomal protein uL5 family. As to quaternary structure, part of the 50S ribosomal subunit; part of the 5S rRNA/L5/L18/L25 subcomplex. Contacts the 5S rRNA and the P site tRNA. Forms a bridge to the 30S subunit in the 70S ribosome.

In terms of biological role, this is one of the proteins that bind and probably mediate the attachment of the 5S RNA into the large ribosomal subunit, where it forms part of the central protuberance. In the 70S ribosome it contacts protein S13 of the 30S subunit (bridge B1b), connecting the 2 subunits; this bridge is implicated in subunit movement. Contacts the P site tRNA; the 5S rRNA and some of its associated proteins might help stabilize positioning of ribosome-bound tRNAs. The chain is Large ribosomal subunit protein uL5 from Rhizobium leguminosarum bv. trifolii (strain WSM2304).